The chain runs to 323 residues: Fructose-1,6-bisphosphatase class 1 (323 aa).

Residues glutamate 84, aspartate 103, leucine 105, and aspartate 106 each coordinate Mg(2+). Residues 106–109 (DGSS), asparagine 198, and lysine 264 contribute to the substrate site. Glutamate 270 serves as a coordination point for Mg(2+).

The protein belongs to the FBPase class 1 family. As to quaternary structure, homotetramer. The cofactor is Mg(2+).

It localises to the cytoplasm. It carries out the reaction beta-D-fructose 1,6-bisphosphate + H2O = beta-D-fructose 6-phosphate + phosphate. The protein operates within carbohydrate biosynthesis; gluconeogenesis. This is Fructose-1,6-bisphosphatase class 1 from Hydrogenovibrio crunogenus (strain DSM 25203 / XCL-2) (Thiomicrospira crunogena).